The chain runs to 826 residues: Periplasmic nitrate reductase (826 aa).

A signal peptide (tat-type signal) is located at residues 1–32 (MELNRRDFMKANAAIAAAAAAGITIPVKNVQA). A 4Fe-4S Mo/W bis-MGD-type domain is found at 37–93 (IRWDKAPCRYCGTGCSVLVGTKDGRVVATQGDPDAEVNRGLNCIKGYFLSKIMYGAD). [4Fe-4S] cluster contacts are provided by cysteine 44, cysteine 47, cysteine 51, and cysteine 79. Residues lysine 81, glutamine 148, asparagine 173, cysteine 177, 210–217 (WGSNMAEM), 241–245 (STYEH), 260–262 (QSD), methionine 370, glutamine 374, asparagine 480, 506–507 (SD), lysine 529, aspartate 556, and 716–725 (TGRVLEHWHT) contribute to the Mo-bis(molybdopterin guanine dinucleotide) site. Phenylalanine 792 contributes to the substrate binding site. Mo-bis(molybdopterin guanine dinucleotide) is bound by residues asparagine 800 and lysine 817.

It belongs to the prokaryotic molybdopterin-containing oxidoreductase family. NasA/NapA/NarB subfamily. In terms of assembly, component of the periplasmic nitrate reductase NapAB complex composed of NapA and NapB. The cofactor is [4Fe-4S] cluster. Requires Mo-bis(molybdopterin guanine dinucleotide) as cofactor. In terms of processing, predicted to be exported by the Tat system. The position of the signal peptide cleavage has not been experimentally proven.

The protein resides in the periplasm. It carries out the reaction 2 Fe(II)-[cytochrome] + nitrate + 2 H(+) = 2 Fe(III)-[cytochrome] + nitrite + H2O. Its function is as follows. Catalytic subunit of the periplasmic nitrate reductase complex NapAB. Receives electrons from NapB and catalyzes the reduction of nitrate to nitrite. The protein is Periplasmic nitrate reductase of Actinobacillus succinogenes (strain ATCC 55618 / DSM 22257 / CCUG 43843 / 130Z).